A 140-amino-acid chain; its full sequence is Nucleoside diphosphate kinase (140 aa).

Residues Lys11, Phe59, Arg87, Thr93, Arg104, and Asn114 each coordinate ATP. Catalysis depends on His117, which acts as the Pros-phosphohistidine intermediate.

Belongs to the NDK family. In terms of assembly, homotetramer. Mg(2+) is required as a cofactor.

The protein resides in the cytoplasm. It carries out the reaction a 2'-deoxyribonucleoside 5'-diphosphate + ATP = a 2'-deoxyribonucleoside 5'-triphosphate + ADP. The enzyme catalyses a ribonucleoside 5'-diphosphate + ATP = a ribonucleoside 5'-triphosphate + ADP. Its function is as follows. Major role in the synthesis of nucleoside triphosphates other than ATP. The ATP gamma phosphate is transferred to the NDP beta phosphate via a ping-pong mechanism, using a phosphorylated active-site intermediate. This Francisella tularensis subsp. tularensis (strain SCHU S4 / Schu 4) protein is Nucleoside diphosphate kinase.